Consider the following 188-residue polypeptide: Putative manganese efflux pump MntP (188 aa).

Helical transmembrane passes span 3 to 23 (LFSLWVMAFGLSMDAFAVSIC), 39 to 59 (AGLYFGLFQAVMPLIGFLLGV), 65 to 85 (ITDYDHWVAFFLLALIGVNML), 110 to 130 (LGFATSIDALAVGVTFAFLSV), 131 to 151 (DIYSSVVTIGLITAALSIIGV), and 167 to 187 (ILGGLILIGLGVKILMEHTLF).

This sequence belongs to the MntP (TC 9.B.29) family.

The protein resides in the cell inner membrane. Probably functions as a manganese efflux pump. The sequence is that of Putative manganese efflux pump MntP from Mannheimia succiniciproducens (strain KCTC 0769BP / MBEL55E).